The chain runs to 335 residues: Stearoyl-CoA desaturase 5 (335 aa).

Residues 1–54 are Cytoplasmic-facing; that stretch reads MPGPAVDAEKVPFRSAKEEIRAGVGVEGSEGGGGGGGRERPGARGHRQDIVWRN. Positions 24–44 are disordered; the sequence is VGVEGSEGGGGGGGRERPGAR. The segment covering 25–36 has biased composition (gly residues); it reads GVEGSEGGGGGG. Residue N54 coordinates substrate. Residues 55-75 traverse the membrane as a helical segment; it reads VFLMSLLHLAAVYSLVLIPKA. Topologically, residues 76–77 are lumenal; it reads QP. A helical transmembrane segment spans residues 78–98; that stretch reads LTLLWAYFCFLLTALGVTAGA. Residues H99 and H104 each contribute to the Fe cation site. The Histidine box-1 motif lies at 99-104; the sequence is HRLWSH. At 99–198 the chain is on the cytoplasmic side; that stretch reads HRLWSHRSYK…VVRFQRKYYK (100 aa). N127, R134, and D135 together coordinate substrate. Fe cation contacts are provided by H136, H139, and H140. Positions 136 to 140 match the Histidine box-2 motif; sequence HRVHH. Substrate contacts are provided by R167 and K168. Residues 199-219 form a helical membrane-spanning segment; it reads ITVVLMCFVVPTLVPWYIWGE. Residues 220-227 lie on the Lumenal side of the membrane; sequence SLWNSYFL. A helical membrane pass occupies residues 228 to 247; sequence ASILRYTISLNVTWLVNSVA. W241 contributes to the substrate binding site. Fe cation is bound by residues H248, H277, H280, and H281. Residues 248–335 lie on the Cytoplasmic side of the membrane; that stretch reads HMYGNRPYDK…RKARTGDGSA (88 aa). The Histidine box-3 signature appears at 277–281; that stretch reads HNYHH.

It belongs to the fatty acid desaturase type 1 family. As to quaternary structure, may self-associate and form homodimers. The cofactor is Fe(2+). Detected in brain.

The protein resides in the endoplasmic reticulum membrane. The catalysed reaction is octadecanoyl-CoA + 2 Fe(II)-[cytochrome b5] + O2 + 2 H(+) = (9Z)-octadecenoyl-CoA + 2 Fe(III)-[cytochrome b5] + 2 H2O. It catalyses the reaction hexadecanoyl-CoA + 2 Fe(II)-[cytochrome b5] + O2 + 2 H(+) = (9Z)-hexadecenoyl-CoA + 2 Fe(III)-[cytochrome b5] + 2 H2O. Its function is as follows. Stearoyl-CoA desaturase that utilizes O(2) and electrons from reduced cytochrome b5 to introduce the first double bond into saturated fatty acyl-CoA substrates. Catalyzes the insertion of a cis double bond at the delta-9 position into fatty acyl-CoA substrates including palmitoyl-CoA and stearoyl-CoA. Gives rise to a mixture of 16:1 and 18:1 unsaturated fatty acids. Involved in neuronal cell proliferation and differentiation through down-regulation of EGFR/AKT/MAPK and Wnt signaling pathways. In Bos taurus (Bovine), this protein is Stearoyl-CoA desaturase 5 (SCD5).